We begin with the raw amino-acid sequence, 148 residues long: 3-dehydroquinate dehydratase (148 aa).

The active-site Proton acceptor is tyrosine 24. Positions 80, 86, and 93 each coordinate substrate. Histidine 106 serves as the catalytic Proton donor. Substrate is bound by residues 107–108 (IS) and arginine 117.

It belongs to the type-II 3-dehydroquinase family. In terms of assembly, homododecamer.

The enzyme catalyses 3-dehydroquinate = 3-dehydroshikimate + H2O. It participates in metabolic intermediate biosynthesis; chorismate biosynthesis; chorismate from D-erythrose 4-phosphate and phosphoenolpyruvate: step 3/7. In terms of biological role, catalyzes a trans-dehydration via an enolate intermediate. The polypeptide is 3-dehydroquinate dehydratase (Acidovorax sp. (strain JS42)).